We begin with the raw amino-acid sequence, 310 residues long: Ribonuclease Z (310 aa).

Zn(2+) contacts are provided by histidine 63, histidine 65, aspartate 67, histidine 68, histidine 141, aspartate 212, and histidine 270. The Proton acceptor role is filled by aspartate 67.

It belongs to the RNase Z family. As to quaternary structure, homodimer. It depends on Zn(2+) as a cofactor.

The catalysed reaction is Endonucleolytic cleavage of RNA, removing extra 3' nucleotides from tRNA precursor, generating 3' termini of tRNAs. A 3'-hydroxy group is left at the tRNA terminus and a 5'-phosphoryl group is left at the trailer molecule.. In terms of biological role, zinc phosphodiesterase, which displays some tRNA 3'-processing endonuclease activity. Probably involved in tRNA maturation, by removing a 3'-trailer from precursor tRNA. The sequence is that of Ribonuclease Z from Limosilactobacillus fermentum (strain NBRC 3956 / LMG 18251) (Lactobacillus fermentum).